A 248-amino-acid chain; its full sequence is uncharacterized protein (248 aa).

In terms of domain architecture, ABC transporter spans 7–246 (VQLSNLSWTF…PASTILLPTS (240 aa)). Residue 43–50 (GQSGSGKS) coordinates ATP.

This sequence belongs to the ABC transporter superfamily.

This is an uncharacterized protein from Mycobacterium tuberculosis (strain CDC 1551 / Oshkosh).